The sequence spans 205 residues: Large ribosomal subunit protein uL3 (205 aa).

It belongs to the universal ribosomal protein uL3 family. As to quaternary structure, part of the 50S ribosomal subunit. Forms a cluster with proteins L14 and L19.

In terms of biological role, one of the primary rRNA binding proteins, it binds directly near the 3'-end of the 23S rRNA, where it nucleates assembly of the 50S subunit. The chain is Large ribosomal subunit protein uL3 from Thermosipho africanus (strain TCF52B).